A 292-amino-acid chain; its full sequence is MSLLIGSHVSMSGKKMLLQSSEEAASYGATTFMIYTGAPQNTRRKAIEDLNIEAGKAHMAEHGLSNIVVHAPYIINIGNTQKPETFRLGVDFLRSEIERTEAIGAKQIVLHPGAHVGAGAEEGIKKIIEGLNEVLTEKRDVQIALETMAGKGSECGCTFEELAKIIDGVTHNERLSVCFDTCHTHDAGYDIVNDFDGVLDEFDRIIGAERIKVVHINDSKNERSARKDRHENIGHGHIGLKALDYIVHHDQFKDIPKILETPFIGKDKKDKRPPYKHEIALLRRELLEPIEK.

The Zn(2+) site is built by His-70, His-111, Glu-146, Asp-180, His-183, His-215, Asp-228, His-230, and Glu-260.

The protein belongs to the AP endonuclease 2 family. It depends on Zn(2+) as a cofactor.

It catalyses the reaction Endonucleolytic cleavage to 5'-phosphooligonucleotide end-products.. Functionally, endonuclease IV plays a role in DNA repair. It cleaves phosphodiester bonds at apurinic or apyrimidinic (AP) sites, generating a 3'-hydroxyl group and a 5'-terminal sugar phosphate. This is Probable endonuclease 4 from Shouchella clausii (strain KSM-K16) (Alkalihalobacillus clausii).